The following is a 136-amino-acid chain: Ribonuclease P protein component (136 aa).

It belongs to the RnpA family. In terms of assembly, consists of a catalytic RNA component (M1 or rnpB) and a protein subunit.

The catalysed reaction is Endonucleolytic cleavage of RNA, removing 5'-extranucleotides from tRNA precursor.. Its function is as follows. RNaseP catalyzes the removal of the 5'-leader sequence from pre-tRNA to produce the mature 5'-terminus. It can also cleave other RNA substrates such as 4.5S RNA. The protein component plays an auxiliary but essential role in vivo by binding to the 5'-leader sequence and broadening the substrate specificity of the ribozyme. The polypeptide is Ribonuclease P protein component (Burkholderia pseudomallei (strain 1106a)).